Consider the following 124-residue polypeptide: Insulin growth factor-like family member 4 (124 aa).

Positions 1-19 (MVPRISAAIFIFELLGSNS) are cleaved as a signal peptide. Residues N57 and N84 are each glycosylated (N-linked (GlcNAc...) asparagine).

Belongs to the IGFL family. Detected in the cerebellum.

Its subcellular location is the secreted. In Homo sapiens (Human), this protein is Insulin growth factor-like family member 4 (IGFL4).